Here is a 384-residue protein sequence, read N- to C-terminus: N-acetyldiaminopimelate deacetylase (384 aa).

Asp75 is an active-site residue. The active-site Proton acceptor is the Glu134.

Belongs to the peptidase M20A family. N-acetyldiaminopimelate deacetylase subfamily.

The enzyme catalyses N-acetyl-(2S,6S)-2,6-diaminopimelate + H2O = (2S,6S)-2,6-diaminopimelate + acetate. It functions in the pathway amino-acid biosynthesis; L-lysine biosynthesis via DAP pathway; LL-2,6-diaminopimelate from (S)-tetrahydrodipicolinate (acetylase route): step 3/3. In terms of biological role, catalyzes the conversion of N-acetyl-diaminopimelate to diaminopimelate and acetate. This is N-acetyldiaminopimelate deacetylase from Lactobacillus helveticus (strain DPC 4571).